Here is a 427-residue protein sequence, read N- to C-terminus: N-acylglucosamine 2-epimerase (427 aa).

Positions 195–216 (LLNLVEQLGEADEELAGKYAEL) are leucine-zipper.

This sequence belongs to the N-acylglucosamine 2-epimerase family. In terms of assembly, homodimer. Forms a heterodimer with renin and inhibits its activity.

It carries out the reaction an N-acyl-D-glucosamine = an N-acyl-D-mannosamine. The protein operates within amino-sugar metabolism; N-acetylneuraminate degradation. Inhibited by N-ethylmaleimide, 5,5'-dithiobis-2-nitrobenzoate and iodoacetic acid. Catalyzes the interconversion of N-acetylglucosamine to N-acetylmannosamine. Involved in the N-glycolylneuraminic acid (Neu5Gc) degradation pathway: although human is not able to catalyze formation of Neu5Gc due to the inactive CMAHP enzyme, Neu5Gc is present in food and must be degraded. This Homo sapiens (Human) protein is N-acylglucosamine 2-epimerase (RENBP).